We begin with the raw amino-acid sequence, 189 residues long: uncharacterized protein (189 aa).

This is an uncharacterized protein from Aquifex aeolicus (strain VF5).